The sequence spans 420 residues: 20-oxo-5-O-mycaminosyltylactone 23-monooxygenase (420 aa).

The segment at 1 to 28 (MSSSGDARPSQKGILLPAARANDTDEAA) is disordered. Positions 118, 122, 311, 367, and 369 each coordinate heme.

This sequence belongs to the cytochrome P450 family.

The catalysed reaction is 20-oxo-5-O-beta-D-mycaminosyltylonolide + 2 reduced [2Fe-2S]-[ferredoxin] + O2 + 2 H(+) = 5-O-beta-D-mycaminosyltylonolide + 2 oxidized [2Fe-2S]-[ferredoxin] + H2O. Its pathway is antibiotic biosynthesis; tylosin biosynthesis. In terms of biological role, involved in the biosynthesis of the complex macrolide antibiotic tylosin. Catalyzes the hydroxylation of 20-oxo-5-O-beta-mycaminosyltylactone at the C-23 position to yield 5-O-beta-mycaminosyltylonolide. The protein is 20-oxo-5-O-mycaminosyltylactone 23-monooxygenase of Streptomyces fradiae (Streptomyces roseoflavus).